A 541-amino-acid polypeptide reads, in one-letter code: Presenilin homolog (541 aa).

Polar residues-rich tracts occupy residues 1–14 (MAAV…SSGL) and 43–52 (NNYGSSNQDQ). Disordered regions lie at residues 1-52 (MAAV…NQDQ) and 69-92 (CGSR…NEME). Residues 1-106 (MAAVNLQASC…LKYGAQHVIK (106 aa)) lie on the Cytoplasmic side of the membrane. A helical transmembrane segment spans residues 107–127 (LFVPVSLCMLVVVATINSISF). Residues 128–154 (YNSTDVYLLYTPFHEQSPEPSVKFWSA) are Lumenal-facing. The N-linked (GlcNAc...) asparagine glycan is linked to Asn-129. The helical transmembrane segment at 155-175 (LANSLILMSVVVVMTFLLIVL) threads the bilayer. Residues 176-182 (YKKRCYR) are Cytoplasmic-facing. A helical transmembrane segment spans residues 183 to 203 (IIHGWLILSSFMLLFIFTYLY). Over 204-216 (LEELLRAYNIPMD) the chain is Lumenal. Residues 217–237 (YPTALLIMWNFGVVGMMSIHW) form a helical membrane-spanning segment. Residues 238–242 (QGPLR) lie on the Cytoplasmic side of the membrane. The helical transmembrane segment at 243-263 (LQQGYLIFVAALMALVFIKYL) threads the bilayer. Residues 264 to 265 (PE) are Lumenal-facing. Residues 266 to 286 (WTAWAVLAAISIWDLIAVLSP) form a helical membrane-spanning segment. Asp-279 is a catalytic residue. The Cytoplasmic portion of the chain corresponds to 287-453 (RGPLRILVET…QNHPDGQEER (167 aa)). The tract at residues 320-481 (NTVTPQQSQA…ASSYGDWTTT (162 aa)) is interaction with Mettl2. Residues 327 to 350 (SQATASSSPSSSNSTTTTRATQNS) show a composition bias toward low complexity. 2 disordered regions span residues 327 to 379 (SQAT…DGSV) and 421 to 449 (EVQS…HPDG). Polar residues-rich tracts occupy residues 361 to 370 (GQRTGNSHPR) and 421 to 443 (EVQS…TAPD). A helical membrane pass occupies residues 454–474 (GIKLGLGDFIFYSVLVGKASS). Residue Asp-461 is part of the active site. The Lumenal portion of the chain corresponds to 475 to 481 (YGDWTTT). The helical transmembrane segment at 482–502 (IACFVAILIGLCLTLLLLAIW) threads the bilayer. Residues 503–506 (RKAL) are Cytoplasmic-facing. The PAL motif lies at 507–509 (PAL). The helical intramembrane region spans 507 to 527 (PALPISITFGLIFCFATSAVV). At 528–541 (KPFMEDLSAKQVFI) the chain is on the cytoplasmic side.

The protein belongs to the peptidase A22A family. As to quaternary structure, homodimer. Component of the gamma-secretase complex, a complex composed of a presenilin (Psn) homodimer, nicastrin (Nct), Aph-1 and Pen-2. Interacts with Mettl2. Isoform 2 shows a better interaction with Mettl2 than isoform 1. Cleaved. The cleavage, which probably takes place between the 6th and the 7th transmembrane regions, may be required for activation of the gamma-secretase activity. Maternally expressed in nurse and follicle cells. In early embryos, expressed in all or most cells and later increases in CNS and epidermal tissues. In larvae, expression is seen in all imaginal disks, brain and optic lobes. In pupae, expression is seen in eye disk and brain.

The protein resides in the endoplasmic reticulum membrane. The protein localises to the golgi apparatus membrane. Probable catalytic subunit of the gamma-secretase complex, an endoprotease complex that catalyzes the intramembrane cleavage of integral membrane proteins such as Notch receptor. Required for S3 cleavage of Notch, which releases activated Notch protein from the cell membrane. Involved in the patterning of the optic lobes. In Drosophila melanogaster (Fruit fly), this protein is Presenilin homolog (Psn).